A 202-amino-acid polypeptide reads, in one-letter code: Riboflavin synthase (202 aa).

Lumazine-binding repeat units follow at residues 1 to 101 (MFTG…MGGH) and 102 to 198 (LVFG…ARLA). 2,4-dihydroxypteridine-binding positions include 4-6 (GII), 47-49 (CLT), 66-68 (EAW), 105-107 (GHV), K140, 149-151 (SLT), and 163-168 (LLIRHS).

As to quaternary structure, homotrimer.

The enzyme catalyses 2 6,7-dimethyl-8-(1-D-ribityl)lumazine + H(+) = 5-amino-6-(D-ribitylamino)uracil + riboflavin. It functions in the pathway cofactor biosynthesis; riboflavin biosynthesis; riboflavin from 2-hydroxy-3-oxobutyl phosphate and 5-amino-6-(D-ribitylamino)uracil: step 2/2. With respect to regulation, is inhibited by riboflavin. Product inhibition may be the major mechanism by which RS regulates its enzymatic activity in vivo. Its function is as follows. Catalyzes the dismutation of two molecules of 6,7-dimethyl-8-ribityllumazine, resulting in the formation of riboflavin and 5-amino-6-(D-ribitylamino)uracil. The chain is Riboflavin synthase from Brucella abortus (strain 2308).